Consider the following 312-residue polypeptide: Ribosomal RNA small subunit methyltransferase H (312 aa).

S-adenosyl-L-methionine is bound by residues 32–34, aspartate 52, phenylalanine 79, aspartate 100, and glutamine 107; that span reads AGH.

Belongs to the methyltransferase superfamily. RsmH family.

The protein resides in the cytoplasm. It catalyses the reaction cytidine(1402) in 16S rRNA + S-adenosyl-L-methionine = N(4)-methylcytidine(1402) in 16S rRNA + S-adenosyl-L-homocysteine + H(+). Specifically methylates the N4 position of cytidine in position 1402 (C1402) of 16S rRNA. This is Ribosomal RNA small subunit methyltransferase H from Listeria monocytogenes serovar 1/2a (strain ATCC BAA-679 / EGD-e).